The primary structure comprises 128 residues: Small ribosomal subunit protein uS8c (128 aa).

It belongs to the universal ribosomal protein uS8 family. As to quaternary structure, part of the 30S ribosomal subunit.

The protein resides in the plastid. It is found in the chloroplast. In terms of biological role, one of the primary rRNA binding proteins, it binds directly to 16S rRNA central domain where it helps coordinate assembly of the platform of the 30S subunit. This Gnetum parvifolium (Small-leaved jointfir) protein is Small ribosomal subunit protein uS8c (rps8).